Reading from the N-terminus, the 267-residue chain is Membrane-spanning 4-domains subfamily A member 10 (267 aa).

At 1-61 (MKAEATVIPS…KKSSLLKELG (61 aa)) the chain is on the cytoplasmic side. A helical membrane pass occupies residues 62–82 (AFHITIALLHLVFGGYLASIV). Over 83–91 (KNLHLVVLK) the chain is Extracellular. The helical transmembrane segment at 92-112 (SWYPFWGAASFLISGILAITM) threads the bilayer. Over 113-121 (KTFSKTYLK) the chain is Cytoplasmic. A helical membrane pass occupies residues 122–142 (MLCLMTNLISLFCVLSGLFVI). At 143 to 171 (SKDLFLESPFESPIWRMYPNSTVHIQRLE) the chain is on the extracellular side. The chain crosses the membrane as a helical span at residues 172–192 (LALLCFTVLELFLPVPTAVTA). The Cytoplasmic portion of the chain corresponds to 193 to 267 (WRGDCPSAKN…GAAIWTQTAN (75 aa)).

It belongs to the MS4A family.

Its subcellular location is the membrane. May be involved in signal transduction as a component of a multimeric receptor complex. The sequence is that of Membrane-spanning 4-domains subfamily A member 10 (MS4A10) from Homo sapiens (Human).